The following is a 247-amino-acid chain: uncharacterized protein (247 aa).

It is found in the mitochondrion. This is an uncharacterized protein from Schizosaccharomyces pombe (strain 972 / ATCC 24843) (Fission yeast).